The following is a 388-amino-acid chain: Lamin tail domain-containing protein 1 (388 aa).

The 119-residue stretch at 136–254 (EVGQFTSSSL…QAIAWYTPIH (119 aa)) folds into the LTD domain. Residues 349 to 388 (EPHNTSTAGGRLDRQPRTRSTRPNRASGSKKKKTSESQKQ) form a disordered region. The span at 365–381 (RTRSTRPNRASGSKKKK) shows a compositional bias: basic residues.

It belongs to the intermediate filament family.

The chain is Lamin tail domain-containing protein 1 (LMNTD1) from Homo sapiens (Human).